The primary structure comprises 238 residues: Survival of motor neuron-related-splicing factor 30 (238 aa).

The region spanning 72-132 (SWKVGEKCMA…RPVEEGRKAK (61 aa)) is the Tudor domain. The short motif at 142–160 (KKEMIAAQREYKKKKALKK) is the Nuclear localization signal element.

Belongs to the SMN family. In terms of assembly, associates with spliceosomes.

The protein localises to the nucleus speckle. Its subcellular location is the nucleus. It localises to the cajal body. Its function is as follows. Involved in spliceosome assembly. The sequence is that of Survival of motor neuron-related-splicing factor 30 (smndc1) from Xenopus tropicalis (Western clawed frog).